The following is a 187-amino-acid chain: Putative glutathione-dependent formaldehyde-activating enzyme (187 aa).

Residues 20-166 form the CENP-V/GFA domain; the sequence is FQGGVLKCKC…FESLGLESYD (147 aa). Cysteine 27, cysteine 29, cysteine 48, cysteine 50, cysteine 53, cysteine 95, and cysteine 98 together coordinate Zn(2+).

It belongs to the Gfa family. Zn(2+) serves as cofactor.

It catalyses the reaction S-(hydroxymethyl)glutathione = glutathione + formaldehyde. It functions in the pathway one-carbon metabolism; formaldehyde degradation; formate from formaldehyde (glutathione route): step 1/3. Catalyzes the condensation of formaldehyde and glutathione to S-hydroxymethylglutathione. This Verticillium alfalfae (strain VaMs.102 / ATCC MYA-4576 / FGSC 10136) (Verticillium wilt of alfalfa) protein is Putative glutathione-dependent formaldehyde-activating enzyme.